The following is a 423-amino-acid chain: UDP-N-acetylglucosamine 1-carboxyvinyltransferase 1 (423 aa).

Phosphoenolpyruvate is bound at residue 23–24 (KN). Arg-96 provides a ligand contact to UDP-N-acetyl-alpha-D-glucosamine. Residue Cys-120 is the Proton donor of the active site. Residue Cys-120 is modified to 2-(S-cysteinyl)pyruvic acid O-phosphothioketal. UDP-N-acetyl-alpha-D-glucosamine contacts are provided by Asp-309 and Val-331.

It belongs to the EPSP synthase family. MurA subfamily.

Its subcellular location is the cytoplasm. It catalyses the reaction phosphoenolpyruvate + UDP-N-acetyl-alpha-D-glucosamine = UDP-N-acetyl-3-O-(1-carboxyvinyl)-alpha-D-glucosamine + phosphate. Its pathway is cell wall biogenesis; peptidoglycan biosynthesis. Its function is as follows. Cell wall formation. Adds enolpyruvyl to UDP-N-acetylglucosamine. This chain is UDP-N-acetylglucosamine 1-carboxyvinyltransferase 1, found in Streptococcus pyogenes serotype M1.